Consider the following 214-residue polypeptide: Shikimate kinase (214 aa).

Residue 35-40 (GAGKST) participates in ATP binding. Mg(2+) is bound at residue Ser-39. Substrate-binding residues include Asp-57, Arg-81, and Gly-103. Position 141 (Arg-141) interacts with ATP. Arg-160 serves as a coordination point for substrate.

It belongs to the shikimate kinase family. As to quaternary structure, monomer. Mg(2+) serves as cofactor.

Its subcellular location is the cytoplasm. The enzyme catalyses shikimate + ATP = 3-phosphoshikimate + ADP + H(+). Its pathway is metabolic intermediate biosynthesis; chorismate biosynthesis; chorismate from D-erythrose 4-phosphate and phosphoenolpyruvate: step 5/7. Functionally, catalyzes the specific phosphorylation of the 3-hydroxyl group of shikimic acid using ATP as a cosubstrate. The protein is Shikimate kinase of Nitrobacter winogradskyi (strain ATCC 25391 / DSM 10237 / CIP 104748 / NCIMB 11846 / Nb-255).